The chain runs to 201 residues: Holliday junction branch migration complex subunit RuvA (201 aa).

Positions methionine 1–arginine 63 are domain I. The domain II stretch occupies residues threonine 64 to leucine 142. Positions phenylalanine 143 to histidine 153 are flexible linker. The tract at residues histidine 153–lysine 201 is domain III.

It belongs to the RuvA family. Homotetramer. Forms an RuvA(8)-RuvB(12)-Holliday junction (HJ) complex. HJ DNA is sandwiched between 2 RuvA tetramers; dsDNA enters through RuvA and exits via RuvB. An RuvB hexamer assembles on each DNA strand where it exits the tetramer. Each RuvB hexamer is contacted by two RuvA subunits (via domain III) on 2 adjacent RuvB subunits; this complex drives branch migration. In the full resolvosome a probable DNA-RuvA(4)-RuvB(12)-RuvC(2) complex forms which resolves the HJ.

It localises to the cytoplasm. Its function is as follows. The RuvA-RuvB-RuvC complex processes Holliday junction (HJ) DNA during genetic recombination and DNA repair, while the RuvA-RuvB complex plays an important role in the rescue of blocked DNA replication forks via replication fork reversal (RFR). RuvA specifically binds to HJ cruciform DNA, conferring on it an open structure. The RuvB hexamer acts as an ATP-dependent pump, pulling dsDNA into and through the RuvAB complex. HJ branch migration allows RuvC to scan DNA until it finds its consensus sequence, where it cleaves and resolves the cruciform DNA. This is Holliday junction branch migration complex subunit RuvA from Geobacillus sp. (strain WCH70).